The sequence spans 124 residues: Schlafen-like protein (124 aa).

It belongs to the Schlafen family. Subgroup poxviridae B3 subfamily.

This chain is Schlafen-like protein, found in Homo sapiens (Human).